Here is a 79-residue protein sequence, read N- to C-terminus: Conotoxin PnMSGL-03 (79 aa).

The signal sequence occupies residues M1–S20. Positions H21–I44 are excised as a propeptide. 3 disulfide bridges follow: C52–C64, C56–C73, and C63–C77. The residue at position 78 (L78) is a Leucine amide.

This sequence belongs to the conotoxin O3 superfamily. In terms of tissue distribution, expressed by the venom duct.

Its subcellular location is the secreted. This chain is Conotoxin PnMSGL-03, found in Conus pennaceus (Feathered cone).